The primary structure comprises 696 residues: Solute carrier family 53 member 1 (696 aa).

Residues 1-228 (MKFAEHLSAH…RVPPLGAAQP (228 aa)) are Cytoplasmic-facing. One can recognise an SPX domain in the interval 2 to 224 (KFAEHLSAHI…MKRLRVPPLG (223 aa)). The tract at residues 158–165 (KILKKHDK) is important for inositol polyphosphate binding. Residues 229–259 (APAWTTFRVGLFCGIFIVLNITLVFAAVFKL) form a helical membrane-spanning segment. At 260–264 (ETDRT) the chain is on the extracellular side. The helical transmembrane segment at 265–296 (VWPLIRIYRGGFLLIEFLFLLGINTYGWRQAG) threads the bilayer. At 297-309 (VNHVLIFELNPRN) the chain is on the cytoplasmic side. Residues 310-337 (NLSHQHLFEIAGFLGILWCLSLLACFFA) traverse the membrane as a helical segment. Over 338–343 (PISIIP) the chain is Extracellular. A helical transmembrane segment spans residues 344–365 (IYVYPLALYGFMVFFLINPTKT). Positions 366–383 (FYYKSRFWLLKLLFRVFT) form an intramembrane region, helical. The Cytoplasmic segment spans residues 384-388 (APFHK). Residues 389 to 422 (VGFADFWLADQLNSLSVILMDLEYMICFYSFELK) form a discontinuously helical membrane-spanning segment. Residues aspartate 398 and asparagine 401 each contribute to the phosphate site. The Extracellular portion of the chain corresponds to 423–429 (WDESKGL). The chain crosses the membrane as a discontinuously helical span at residues 430-471 (LPNDPQGPEFCHKYTYGVRAIVQCIPAWLRFIQCLRRYRDTR). In terms of domain architecture, EXS spans 439 to 643 (FCHKYTYGVR…LNADDQTLLE (205 aa)). Position 472 (arginine 472) is a topological domain, cytoplasmic. A helical membrane pass occupies residues 473 to 503 (AFPHLVNAGKYSTTFFTVTFAALYSTHKEQN). Phosphate contacts are provided by lysine 482 and tyrosine 483. Topologically, residues 504–506 (HPD) are extracellular. The chain crosses the membrane as a helical span at residues 507–534 (YKVFFYLWVFFCIISSCYTLIWDLKMDW). The Cytoplasmic segment spans residues 535 to 553 (GLFDKNAGENTFLREEIVY). Residues 554 to 585 (PQKAYYYCAIIEDVILRFAWTIQISITVTTFK) form a discontinuously helical membrane-spanning segment. Arginine 570 contributes to the phosphate binding site. Residues 586–587 (PH) are Extracellular-facing. A helical transmembrane segment spans residues 588-626 (VGDIIATVFAPLEVFRRFVWNFFRLENEHLNNCGEFRAV). Positions 603 and 604 each coordinate phosphate. Over 627-696 (RDISVAPLNA…IEDTDDEANT (70 aa)) the chain is Cytoplasmic. Position 668 is a phosphoserine (serine 668). The tract at residues 672–696 (PRLASQSKARDTKVLIEDTDDEANT) is disordered. Threonine 690 is modified (phosphothreonine).

Belongs to the SYG1 (TC 2.A.94) family. Homodimer.

The protein localises to the cell membrane. The catalysed reaction is phosphate(in) = phosphate(out). Its function is as follows. Inorganic ion transporter that mediates phosphate ion export across plasma membrane. Plays a major role in phosphate homeostasis, preventing intracellular phosphate accumulation and possible calcium phosphate precipitation, ultimately preserving calcium signaling. Binds inositol hexakisphosphate (Ins6P) and similar inositol polyphosphates, such as 5-diphospho-inositol pentakisphosphate (5-InsP7), which are important intracellular signaling molecules involved in regulation of phosphate flux. In Mus pahari (Gairdner's shrew-mouse), this protein is Solute carrier family 53 member 1 (Xpr1).